Here is a 1523-residue protein sequence, read N- to C-terminus: uncharacterized protein (1523 aa).

The tract at residues 1 to 89 (MLPTSSNNEE…GSSNMNPYDR (89 aa)) is disordered. Position 993-1000 (993-1000 (SPFGCGKS)) interacts with ATP. 2 stretches are compositionally biased toward polar residues: residues 1463–1476 (TSRQSKQQRANEYN) and 1485–1498 (QSNNDYGSQRSVTN). Positions 1463 to 1498 (TSRQSKQQRANEYNSQHKHVKRQSNNDYGSQRSVTN) are disordered.

The protein belongs to the DNA2/NAM7 helicase family.

This is an uncharacterized protein from Caenorhabditis elegans.